The chain runs to 156 residues: Small ribosomal subunit protein uS7 (156 aa).

The protein belongs to the universal ribosomal protein uS7 family. As to quaternary structure, part of the 30S ribosomal subunit. Contacts proteins S9 and S11.

In terms of biological role, one of the primary rRNA binding proteins, it binds directly to 16S rRNA where it nucleates assembly of the head domain of the 30S subunit. Is located at the subunit interface close to the decoding center, probably blocks exit of the E-site tRNA. In Latilactobacillus sakei subsp. sakei (strain 23K) (Lactobacillus sakei subsp. sakei), this protein is Small ribosomal subunit protein uS7.